The following is an 88-amino-acid chain: Auxin-responsive protein SAUR21 (88 aa).

It belongs to the ARG7 family.

Its subcellular location is the cell membrane. In terms of biological role, functions as a positive effector of cell expansion through modulation of auxin transport. In Arabidopsis thaliana (Mouse-ear cress), this protein is Auxin-responsive protein SAUR21.